The sequence spans 360 residues: Peptide chain release factor 1 (360 aa).

Q234 carries the post-translational modification N5-methylglutamine.

Belongs to the prokaryotic/mitochondrial release factor family. Methylated by PrmC. Methylation increases the termination efficiency of RF1.

The protein resides in the cytoplasm. In terms of biological role, peptide chain release factor 1 directs the termination of translation in response to the peptide chain termination codons UAG and UAA. In Renibacterium salmoninarum (strain ATCC 33209 / DSM 20767 / JCM 11484 / NBRC 15589 / NCIMB 2235), this protein is Peptide chain release factor 1.